The chain runs to 266 residues: Ras-like protein family member 12 (266 aa).

Residues 27-34 (GRRGAGKS), 74-78 (DTADL), and 134-137 (NKLD) contribute to the GTP site.

Belongs to the small GTPase superfamily. Ras family.

The catalysed reaction is GTP + H2O = GDP + phosphate + H(+). The protein is Ras-like protein family member 12 (RASL12) of Bos taurus (Bovine).